The following is a 216-amino-acid chain: uncharacterized protein (216 aa).

Residues 39–59 (VLPLTFIGSLLILILTIVYYF) form a helical membrane-spanning segment. A coiled-coil region spans residues 59 to 108 (FTLSGSVNELKNEISKEKSKKERLLSEIKRLEELKKTLETKKAIYEVVKI).

The protein resides in the membrane. This is an uncharacterized protein from Aquifex aeolicus (strain VF5).